A 258-amino-acid chain; its full sequence is Glutamate racemase (258 aa).

Substrate contacts are provided by residues 11–12 (DS) and 43–44 (YG). Cys74 acts as the Proton donor/acceptor in catalysis. 75–76 (NT) contributes to the substrate binding site. The active-site Proton donor/acceptor is Cys182. 183 to 184 (TH) is a substrate binding site.

This sequence belongs to the aspartate/glutamate racemases family.

The catalysed reaction is L-glutamate = D-glutamate. It participates in cell wall biogenesis; peptidoglycan biosynthesis. Provides the (R)-glutamate required for cell wall biosynthesis. This chain is Glutamate racemase, found in Leptospira borgpetersenii serovar Hardjo-bovis (strain JB197).